We begin with the raw amino-acid sequence, 266 residues long: Methyl-coenzyme M reductase II subunit gamma (266 aa).

Residue Arg123 participates in coenzyme M binding.

It belongs to the methyl-coenzyme M reductase gamma subunit family. In terms of assembly, MCR is a hexamer of two alpha, two beta, and two gamma chains, forming a dimer of heterotrimers. It depends on coenzyme F430 as a cofactor.

It carries out the reaction coenzyme B + methyl-coenzyme M = methane + coenzyme M-coenzyme B heterodisulfide. The protein operates within one-carbon metabolism; methyl-coenzyme M reduction; methane from methyl-coenzyme M: step 1/1. Component of the methyl-coenzyme M reductase (MCR) I that catalyzes the reductive cleavage of methyl-coenzyme M (CoM-S-CH3 or 2-(methylthio)ethanesulfonate) using coenzyme B (CoB or 7-mercaptoheptanoylthreonine phosphate) as reductant which results in the production of methane and the mixed heterodisulfide of CoB and CoM (CoM-S-S-CoB). This is the final step in methanogenesis. The chain is Methyl-coenzyme M reductase II subunit gamma (mrtG) from Methanocaldococcus jannaschii (strain ATCC 43067 / DSM 2661 / JAL-1 / JCM 10045 / NBRC 100440) (Methanococcus jannaschii).